A 971-amino-acid chain; its full sequence is Translation initiation factor IF-2 (971 aa).

Basic and acidic residues predominate over residues 49 to 63 (HLRKSHGATDGDKRK). Disordered stretches follow at residues 49–86 (HLRK…ARTI) and 101–385 (DVAE…APTE). Low complexity predominate over residues 105 to 114 (GAEQGQAQVA). The segment covering 121–177 (ELKRREEEARREAELLEKQAQELRERQERLEREEAERRAREEAAEAQRRRAEEEAAA) has biased composition (basic and acidic residues). A compositionally biased stretch (low complexity) spans 178 to 209 (KRAAAAAVEAQQVAAQQAAEAQQETAGAQSAQ). A compositionally biased stretch (basic and acidic residues) spans 210–261 (DEARAAAERAAQREAAKKAEDAAREAADKTRAEQEEIRKRREAAEAEARAIR). Residues 277–286 (PPKPVEPPKP) show a composition bias toward pro residues. Over residues 298 to 325 (KPAGASAARPAVKKPAGAAPATTAPAGA) the composition is skewed to low complexity. Positions 355 to 368 (SSGGVDRGWRGGPK) are enriched in gly residues. In terms of domain architecture, tr-type G spans 471-640 (PRPPVVTVMG…LLQAEVLELK (170 aa)). The interval 480-487 (GHVDHGKT) is G1. Position 480–487 (480–487 (GHVDHGKT)) interacts with GTP. The segment at 505–509 (GITQH) is G2. The interval 526 to 529 (DTPG) is G3. GTP-binding positions include 526-530 (DTPGH) and 580-583 (NKID). The G4 stretch occupies residues 580 to 583 (NKID). The tract at residues 616–618 (SAK) is G5.

Belongs to the TRAFAC class translation factor GTPase superfamily. Classic translation factor GTPase family. IF-2 subfamily.

Its subcellular location is the cytoplasm. Functionally, one of the essential components for the initiation of protein synthesis. Protects formylmethionyl-tRNA from spontaneous hydrolysis and promotes its binding to the 30S ribosomal subunits. Also involved in the hydrolysis of GTP during the formation of the 70S ribosomal complex. The protein is Translation initiation factor IF-2 of Burkholderia ambifaria (strain ATCC BAA-244 / DSM 16087 / CCUG 44356 / LMG 19182 / AMMD) (Burkholderia cepacia (strain AMMD)).